An 83-amino-acid polypeptide reads, in one-letter code: Small ribosomal subunit protein bS16 (83 aa).

It belongs to the bacterial ribosomal protein bS16 family.

The polypeptide is Small ribosomal subunit protein bS16 (Stutzerimonas stutzeri (strain A1501) (Pseudomonas stutzeri)).